A 140-amino-acid chain; its full sequence is Low calcium response locus protein T (140 aa).

This Yersinia pseudotuberculosis serotype I (strain IP32953) protein is Low calcium response locus protein T (lcrT).